The sequence spans 657 residues: Pentatricopeptide repeat-containing protein CRR2, chloroplastic (657 aa).

The N-terminal 51 residues, M1–Q51, are a transit peptide targeting the chloroplast. PPR repeat units lie at residues A45 to P75, S76 to Q110, D111 to R141, T142 to S176, D177 to S215, H216 to R246, N247 to E277, N284 to S318, I319 to R349, D350 to P384, T385 to P420, and Q421 to E451. A type E motif region spans residues V456 to R531. The type E(+) motif stretch occupies residues R532 to K562. Positions E563 to W657 are type DYW motif.

It belongs to the PPR family. PCMP-H subfamily.

The protein localises to the plastid. Its subcellular location is the chloroplast. Its function is as follows. Required for the intergenic processing between chloroplast rsp7 and ndhB transcripts. Necessary for chloroplast NADH dehydrogenase-like (NDH) complex-dependent cyclic electron transport around PSI (CET). The chain is Pentatricopeptide repeat-containing protein CRR2, chloroplastic from Arabidopsis thaliana (Mouse-ear cress).